The primary structure comprises 225 residues: Ribose-5-phosphate isomerase A (225 aa).

Substrate is bound by residues 33 to 36 (TGST), 86 to 89 (DGAD), and 99 to 102 (KGGG). Glu-108 functions as the Proton acceptor in the catalytic mechanism. A substrate-binding site is contributed by Lys-126.

The protein belongs to the ribose 5-phosphate isomerase family. In terms of assembly, homodimer.

It carries out the reaction aldehydo-D-ribose 5-phosphate = D-ribulose 5-phosphate. Its pathway is carbohydrate degradation; pentose phosphate pathway; D-ribose 5-phosphate from D-ribulose 5-phosphate (non-oxidative stage): step 1/1. In terms of biological role, catalyzes the reversible conversion of ribose-5-phosphate to ribulose 5-phosphate. The sequence is that of Ribose-5-phosphate isomerase A from Bordetella petrii (strain ATCC BAA-461 / DSM 12804 / CCUG 43448).